We begin with the raw amino-acid sequence, 307 residues long: Ribosomal RNA small subunit methyltransferase A (307 aa).

6 residues coordinate S-adenosyl-L-methionine: Asn35, Val37, Gly62, Glu83, Asp113, and Asn136.

This sequence belongs to the class I-like SAM-binding methyltransferase superfamily. rRNA adenine N(6)-methyltransferase family. RsmA subfamily.

The protein resides in the cytoplasm. It catalyses the reaction adenosine(1518)/adenosine(1519) in 16S rRNA + 4 S-adenosyl-L-methionine = N(6)-dimethyladenosine(1518)/N(6)-dimethyladenosine(1519) in 16S rRNA + 4 S-adenosyl-L-homocysteine + 4 H(+). Specifically dimethylates two adjacent adenosines (A1518 and A1519) in the loop of a conserved hairpin near the 3'-end of 16S rRNA in the 30S particle. May play a critical role in biogenesis of 30S subunits. The chain is Ribosomal RNA small subunit methyltransferase A from Bifidobacterium longum subsp. infantis (strain ATCC 15697 / DSM 20088 / JCM 1222 / NCTC 11817 / S12).